We begin with the raw amino-acid sequence, 429 residues long: Tryptophan synthase beta chain 2 (429 aa).

K111 is modified (N6-(pyridoxal phosphate)lysine).

Belongs to the TrpB family. In terms of assembly, tetramer of two alpha and two beta chains. It depends on pyridoxal 5'-phosphate as a cofactor.

It carries out the reaction (1S,2R)-1-C-(indol-3-yl)glycerol 3-phosphate + L-serine = D-glyceraldehyde 3-phosphate + L-tryptophan + H2O. Its pathway is amino-acid biosynthesis; L-tryptophan biosynthesis; L-tryptophan from chorismate: step 5/5. Its function is as follows. The beta subunit is responsible for the synthesis of L-tryptophan from indole and L-serine. The polypeptide is Tryptophan synthase beta chain 2 (trpB2) (Saccharolobus solfataricus (strain ATCC 35092 / DSM 1617 / JCM 11322 / P2) (Sulfolobus solfataricus)).